The following is a 955-amino-acid chain: 2-oxoglutarate dehydrogenase E1 component (955 aa).

Belongs to the alpha-ketoglutarate dehydrogenase family. In terms of assembly, homodimer. Part of the 2-oxoglutarate dehydrogenase (OGDH) complex composed of E1 (2-oxoglutarate dehydrogenase), E2 (dihydrolipoamide succinyltransferase) and E3 (dihydrolipoamide dehydrogenase); the complex contains multiple copies of the three enzymatic components (E1, E2 and E3). It depends on thiamine diphosphate as a cofactor.

It carries out the reaction N(6)-[(R)-lipoyl]-L-lysyl-[protein] + 2-oxoglutarate + H(+) = N(6)-[(R)-S(8)-succinyldihydrolipoyl]-L-lysyl-[protein] + CO2. Functionally, E1 component of the 2-oxoglutarate dehydrogenase (OGDH) complex which catalyzes the decarboxylation of 2-oxoglutarate, the first step in the conversion of 2-oxoglutarate to succinyl-CoA and CO(2). The polypeptide is 2-oxoglutarate dehydrogenase E1 component (Bacillus cereus (strain 03BB102)).